The primary structure comprises 582 residues: Two-component response regulator ORR26 (582 aa).

A Response regulatory domain is found at 11 to 126 (RVLVVDDDPT…ELRNIWQHVY (116 aa)). Position 62 is a 4-aspartylphosphate (Asp62). The span at 166–182 (SDTMRKRKDVDKDHADQ) shows a compositional bias: basic and acidic residues. Positions 166–187 (SDTMRKRKDVDKDHADQESSDG) are disordered. The segment at residues 189–248 (TVKKARVVWSVDLHQKFVNAVNQIGFDKVGPKKILDLMNVPGLTRENVASHLQKYRLYLS) is a DNA-binding region (myb-like GARP).

It belongs to the ARR family. Type-B subfamily. Two-component system major event consists of a His-to-Asp phosphorelay between a sensor histidine kinase (HK) and a response regulator (RR). In plants, the His-to-Asp phosphorelay involves an additional intermediate named Histidine-containing phosphotransfer protein (HPt). This multistep phosphorelay consists of a His-Asp-His-Asp sequential transfer of a phosphate group between first a His and an Asp of the HK protein, followed by the transfer to a conserved His of the HPt protein and finally the transfer to an Asp in the receiver domain of the RR protein.

The protein resides in the nucleus. Transcriptional activator that binds specific DNA sequence. Functions as a response regulator involved in His-to-Asp phosphorelay signal transduction system. Phosphorylation of the Asp residue in the receiver domain activates the ability of the protein to promote the transcription of target genes. May directly activate some type-A response regulators in response to cytokinins. The protein is Two-component response regulator ORR26 of Oryza sativa subsp. japonica (Rice).